The sequence spans 1317 residues: DNA-directed RNA polymerase subunit beta' (1317 aa).

The Zn(2+) site is built by Cys-60, Cys-62, Cys-75, and Cys-78. Positions 535, 537, and 539 each coordinate Mg(2+). Zn(2+) is bound by residues Cys-890, Cys-967, Cys-974, and Cys-977.

It belongs to the RNA polymerase beta' chain family. The RNAP catalytic core consists of 2 alpha, 1 beta, 1 beta' and 1 omega subunit. When a sigma factor is associated with the core the holoenzyme is formed, which can initiate transcription. It depends on Mg(2+) as a cofactor. Zn(2+) serves as cofactor.

It carries out the reaction RNA(n) + a ribonucleoside 5'-triphosphate = RNA(n+1) + diphosphate. Its function is as follows. DNA-dependent RNA polymerase catalyzes the transcription of DNA into RNA using the four ribonucleoside triphosphates as substrates. The polypeptide is DNA-directed RNA polymerase subunit beta' (Nocardia farcinica (strain IFM 10152)).